An 807-amino-acid chain; its full sequence is Sucrose synthase 2 (807 aa).

The interval 274 to 752 (MVFNVVILSP…GLKRIYERYT (479 aa)) is GT-B glycosyltransferase.

It belongs to the glycosyltransferase 1 family. Plant sucrose synthase subfamily. Detected in the whole plant but at lower levels. Predominantly expressed in developing siliques. Also detected in the root tip. Detected in the embryo, endosperm and seed coat (at the protein level).

The protein resides in the cytoplasm. Its subcellular location is the plastid membrane. It carries out the reaction an NDP-alpha-D-glucose + D-fructose = a ribonucleoside 5'-diphosphate + sucrose + H(+). In terms of biological role, sucrose-cleaving enzyme that provides UDP-glucose and fructose for various metabolic pathways. Modulates metabolic homeostasis and directs carbon towards starch synthesis in developing seeds. The chain is Sucrose synthase 2 (SUS2) from Arabidopsis thaliana (Mouse-ear cress).